Consider the following 601-residue polypeptide: ATP-dependent lipid A-core flippase (601 aa).

A run of 4 helical transmembrane segments spans residues 27 to 47 (IGLF…QPML), 83 to 103 (LLIV…NYFL), 174 to 194 (LLWM…LIAV), and 267 to 287 (PLLQ…VLYL). The ABC transmembrane type-1 domain maps to 31–322 (LISIVGFLIF…LSEVSSTIQK (292 aa)). Positions 354–590 (LEVRNLSFTY…NGYYSRLHAM (237 aa)) constitute an ABC transporter domain. ATP is bound at residue 388-395 (GRSGSGKS).

The protein belongs to the ABC transporter superfamily. Lipid exporter (TC 3.A.1.106) family. Homodimer.

Its subcellular location is the cell inner membrane. The enzyme catalyses ATP + H2O + lipid A-core oligosaccharideSide 1 = ADP + phosphate + lipid A-core oligosaccharideSide 2.. In terms of biological role, involved in lipopolysaccharide (LPS) biosynthesis. Translocates lipid A-core from the inner to the outer leaflet of the inner membrane. Transmembrane domains (TMD) form a pore in the inner membrane and the ATP-binding domain (NBD) is responsible for energy generation. The polypeptide is ATP-dependent lipid A-core flippase (Pseudomonas fluorescens (strain ATCC BAA-477 / NRRL B-23932 / Pf-5)).